The sequence spans 233 residues: Gamma-glutamyl-hercynylcysteine sulfoxide hydrolase (233 aa).

Catalysis depends on cysteine 2, which acts as the Nucleophile. The Glutamine amidotransferase type-2 domain maps to 2 to 233 (CRHLGWLGAQ…TALDRAKGPR (232 aa)).

The enzyme catalyses gamma-L-glutamyl-hercynylcysteine S-oxide + H2O = S-(hercyn-2-yl)-L-cysteine S-oxide + L-glutamate. The protein operates within amino-acid biosynthesis; ergothioneine biosynthesis. Its function is as follows. Catalyzes the hydrolysis of the gamma-glutamyl amide bond of hercynyl-gamma-L-glutamyl-L-cysteine sulfoxide to produce hercynylcysteine sulfoxide, a step in the biosynthesis pathway of ergothioneine. Ergothioneine is an antioxidant that protects mycobacteria from oxidative stress. This chain is Gamma-glutamyl-hercynylcysteine sulfoxide hydrolase (egtC), found in Mycobacterium tuberculosis (strain ATCC 25618 / H37Rv).